Reading from the N-terminus, the 175-residue chain is UPF0398 protein SUB1405 (175 aa).

It belongs to the UPF0398 family.

This chain is UPF0398 protein SUB1405, found in Streptococcus uberis (strain ATCC BAA-854 / 0140J).